A 265-amino-acid chain; its full sequence is Chorismate mutase 2 (265 aa).

The 256-residue stretch at 10 to 265 (GSGCSNVLSL…EVEYLLRRLD (256 aa)) folds into the Chorismate mutase domain.

In terms of assembly, homodimer. In terms of tissue distribution, expressed in roots, stems, cauline leaves and flowers, and at lower levels in rosette leaves and siliques.

Its subcellular location is the cytoplasm. It localises to the cytosol. The enzyme catalyses chorismate = prephenate. Its pathway is metabolic intermediate biosynthesis; prephenate biosynthesis; prephenate from chorismate: step 1/1. No allosteric regulation. The chain is Chorismate mutase 2 from Arabidopsis thaliana (Mouse-ear cress).